We begin with the raw amino-acid sequence, 248 residues long: Anamorsin homolog (248 aa).

The tract at residues 4–130 (FKGLQKSLYI…ETGSSARLSF (127 aa)) is N-terminal SAM-like domain. Residues 131–161 (AKKSPSMNVWKISGDDEELIDEEELLDEEDK) form a linker region. Residues cysteine 172, cysteine 181, cysteine 184, and cysteine 186 each contribute to the [2Fe-2S] cluster site. The interval 172 to 186 (CSTTGKRKACKNCSC) is fe-S binding site A. Cysteine 209, cysteine 212, cysteine 220, and cysteine 223 together coordinate [4Fe-4S] cluster. Short sequence motifs (cx2C motif) lie at residues 209-212 (CGNC) and 220-223 (CSTC). Residues 209 to 223 (CGNCYLGDAFRCSTC) are fe-S binding site B.

It belongs to the anamorsin family. As to quaternary structure, monomer. Requires [2Fe-2S] cluster as cofactor. [4Fe-4S] cluster is required as a cofactor.

The protein resides in the cytoplasm. It localises to the mitochondrion intermembrane space. In terms of biological role, component of the cytosolic iron-sulfur (Fe-S) protein assembly (CIA) machinery. Required for the maturation of extramitochondrial Fe-S proteins. Part of an electron transfer chain functioning in an early step of cytosolic Fe-S biogenesis, facilitating the de novo assembly of a [4Fe-4S] cluster on the cytosolic Fe-S scaffold complex. Electrons are transferred from NADPH via a FAD- and FMN-containing diflavin oxidoreductase. Together with the diflavin oxidoreductase, also required for the assembly of the diferric tyrosyl radical cofactor of ribonucleotide reductase (RNR), probably by providing electrons for reduction during radical cofactor maturation in the catalytic small subunit. The polypeptide is Anamorsin homolog (Drosophila mojavensis (Fruit fly)).